Consider the following 126-residue polypeptide: Large ribosomal subunit protein bL17c (126 aa).

A chloroplast-targeting transit peptide spans 1 to 10; sequence MIDNGGRFFA.

In terms of assembly, component of the chloroplast large ribosomal subunit (LSU). Mature 70S chloroplast ribosomes of higher plants consist of a small (30S) and a large (50S) subunit. The 30S small subunit contains 1 molecule of ribosomal RNA (16S rRNA) and 24 different proteins. The 50S large subunit contains 3 rRNA molecules (23S, 5S and 4.5S rRNA) and 33 different proteins.

The protein localises to the plastid. It localises to the chloroplast. Functionally, component of the chloroplast ribosome (chloro-ribosome), a dedicated translation machinery responsible for the synthesis of chloroplast genome-encoded proteins, including proteins of the transcription and translation machinery and components of the photosynthetic apparatus. This Spinacia oleracea (Spinach) protein is Large ribosomal subunit protein bL17c (RPL17).